A 417-amino-acid polypeptide reads, in one-letter code: uncharacterized protein (417 aa).

10 consecutive transmembrane segments (helical) span residues 21–41 (ISSL…AFQL), 50–70 (LLMM…GLLA), 88–108 (LTVI…LLSV), 166–186 (SVFY…FFLP), 217–237 (MPLL…LQIG), 255–275 (LAGW…AITG), 283–303 (LLYF…APFL), 308–328 (IAGI…FGLV), 351–371 (AIQS…GVLA), and 373–393 (WIGV…IGLI).

This sequence belongs to the major facilitator superfamily. TCR/Tet family.

The protein resides in the cell membrane. This is an uncharacterized protein from Bacillus subtilis (strain 168).